We begin with the raw amino-acid sequence, 359 residues long: E2F transcription factor-like E2FD (359 aa).

2 consecutive DNA-binding regions follow at residues 13–78 and 138–217; these read RKDK…SWKG and RKER…RWLG. Disordered regions lie at residues 255–274 and 288–313; these read RNKS…QNTS and DVKN…NNIR. The segment covering 293–309 has biased composition (polar residues); it reads ASGSSTPAGTSESNDMG.

This sequence belongs to the E2F/DP family. Monomer. No interactions with DPA or E2FA. Preferentially expressed in proliferating tissues. Highly expressed in young stalk and young flowers. Lower expression in young leaves and mature flowers. Detected in cotyledonary vascular tissues, the shoot apical meristem, the base of trichomes, the fully developed stomata, the central root cylinder and in the columella of lateral roots but not in the primary root tips or in the leaf epidermal cells.

It localises to the nucleus. Functionally, inhibitor of E2F-dependent regulation of gene expression. Binds specifically the E2 recognition site as a monomer without interacting with DP proteins. May be up-regulating E2FA and down-regulating repressors of cell cycle progression. Promotes cell proliferation and represses cell elongation. Regulated by proteolysis via a ubiquitin-proteasome pathway. This chain is E2F transcription factor-like E2FD (E2FD), found in Arabidopsis thaliana (Mouse-ear cress).